The following is a 238-amino-acid chain: 2-C-methyl-D-erythritol 4-phosphate cytidylyltransferase (238 aa).

The protein belongs to the IspD/TarI cytidylyltransferase family. IspD subfamily.

The catalysed reaction is 2-C-methyl-D-erythritol 4-phosphate + CTP + H(+) = 4-CDP-2-C-methyl-D-erythritol + diphosphate. Its pathway is isoprenoid biosynthesis; isopentenyl diphosphate biosynthesis via DXP pathway; isopentenyl diphosphate from 1-deoxy-D-xylulose 5-phosphate: step 2/6. In terms of biological role, catalyzes the formation of 4-diphosphocytidyl-2-C-methyl-D-erythritol from CTP and 2-C-methyl-D-erythritol 4-phosphate (MEP). In Acinetobacter baumannii (strain ATCC 17978 / DSM 105126 / CIP 53.77 / LMG 1025 / NCDC KC755 / 5377), this protein is 2-C-methyl-D-erythritol 4-phosphate cytidylyltransferase.